Consider the following 301-residue polypeptide: ATP synthase gamma chain (301 aa).

Belongs to the ATPase gamma chain family. F-type ATPases have 2 components, CF(1) - the catalytic core - and CF(0) - the membrane proton channel. CF(1) has five subunits: alpha(3), beta(3), gamma(1), delta(1), epsilon(1). CF(0) has three main subunits: a, b and c.

The protein resides in the cell inner membrane. In terms of biological role, produces ATP from ADP in the presence of a proton gradient across the membrane. The gamma chain is believed to be important in regulating ATPase activity and the flow of protons through the CF(0) complex. The polypeptide is ATP synthase gamma chain (Helicobacter pylori (strain P12)).